The following is a 183-amino-acid chain: Transcription factor 15 (183 aa).

The segment at 24 to 46 (DEENRSESDTSDQSYGCCEGAEA) is disordered. A bHLH domain is found at 61-113 (KQRQAANARERDRTQSVNTAFTALRTLIPTEPVDRKLSKIETLRLASSYIAHL).

As to quaternary structure, heterodimer; efficient DNA binding requires dimerization with another bHLH protein.

Its subcellular location is the nucleus. In terms of biological role, early transcription factor that plays a key role in somitogenesis, paraxial mesoderm development and regulation of stem cell pluripotency. Essential for the mesenchymal to epithelial transition associated with somite formation. Required for somite morphogenesis, thereby regulating patterning of the axial skeleton and skeletal muscles. Also plays a key role in regulation of stem cell pluripotency. Promotes pluripotency exit of embryonic stem cells (ESCs) by priming ESCs for differentiation. Acts as a key regulator of self-renewal of hematopoietic stem cells (HSCs) by mediating HSCs quiescence and long-term self-renewal. Acts by forming a heterodimer with another helix-loop-helix (bHLH) protein, that binds DNA on E-box motifs (5'-CANNTG-3') and activates transcription of target genes. This is Transcription factor 15 (TCF15) from Gallus gallus (Chicken).